Reading from the N-terminus, the 205-residue chain is Fe/S biogenesis protein NfuA (205 aa).

2 residues coordinate [4Fe-4S] cluster: C162 and C165.

This sequence belongs to the NfuA family. Homodimer. It depends on [4Fe-4S] cluster as a cofactor.

Its function is as follows. Involved in iron-sulfur cluster biogenesis. Binds a 4Fe-4S cluster, can transfer this cluster to apoproteins, and thereby intervenes in the maturation of Fe/S proteins. Could also act as a scaffold/chaperone for damaged Fe/S proteins. This is Fe/S biogenesis protein NfuA from Blochmanniella floridana.